Reading from the N-terminus, the 365-residue chain is Bifunctional chorismate mutase/prephenate dehydratase (365 aa).

Positions 1–96 (MSEADQLKAL…SCLALEQPLR (96 aa)) constitute a Chorismate mutase domain. Residues R11, R28, K39, and E57 each contribute to the substrate site. The region spanning 97 to 272 (VAYLGPEGTF…NSTRFLIIGS (176 aa)) is the Prephenate dehydratase domain. One can recognise an ACT domain in the interval 284 to 361 (SIIVSMRNKP…VALKVLGSYP (78 aa)).

The protein localises to the cytoplasm. The enzyme catalyses chorismate = prephenate. The catalysed reaction is prephenate + H(+) = 3-phenylpyruvate + CO2 + H2O. The protein operates within amino-acid biosynthesis; L-phenylalanine biosynthesis; phenylpyruvate from prephenate: step 1/1. It participates in metabolic intermediate biosynthesis; prephenate biosynthesis; prephenate from chorismate: step 1/1. Its function is as follows. Catalyzes the Claisen rearrangement of chorismate to prephenate and the decarboxylation/dehydration of prephenate to phenylpyruvate. The sequence is that of Bifunctional chorismate mutase/prephenate dehydratase from Stutzerimonas stutzeri (Pseudomonas stutzeri).